The following is a 373-amino-acid chain: CXADR-like membrane protein (373 aa).

The signal sequence occupies residues 1–17 (MSLFFLWLVSYYVGTLG). 2 consecutive Ig-like C2-type domains span residues 18-126 (THTE…VILK) and 134-223 (PKCE…VRVT). Over 18–234 (THTEIKRVAE…QYVQSIGMVA (217 aa)) the chain is Extracellular. 2 disulfide bridges follow: cysteine 34/cysteine 110 and cysteine 152/cysteine 207. N-linked (GlcNAc...) asparagine glycans are attached at residues asparagine 73 and asparagine 196. The helical transmembrane segment at 235 to 255 (GAVTGIVAGALLIFLLIWLLI) threads the bilayer. The Cytoplasmic portion of the chain corresponds to 256–373 (RRKSKDRYEE…PSQSKAFQTV (118 aa)). Over residues 263–280 (YEEEDRPNEIREDAEAPR) the composition is skewed to basic and acidic residues. Residues 263–373 (YEEEDRPNEI…PSQSKAFQTV (111 aa)) form a disordered region. Low complexity-rich tracts occupy residues 287–313 (SSSSSGSRSSRSGSSSTRSTGNSASRS), 321–332 (AAPQQPGLAPQA), and 353–363 (LTKAETTLSTT). The span at 364–373 (PSQSKAFQTV) shows a compositional bias: polar residues.

In terms of tissue distribution, predominantly expressed in epithelial cells within different tissues and in the white adipose tissue. Expressed at high levels in the heart and brain, at intermediate levels in the lung, skeletal muscle, kidney and testis and at low levels in the liver and spleen.

It is found in the cell junction. The protein localises to the tight junction. The protein resides in the cell membrane. May be involved in the cell-cell adhesion. May play a role in adipocyte differentiation and development of obesity. Is required for normal small intestine development. The polypeptide is CXADR-like membrane protein (Clmp) (Mus musculus (Mouse)).